The primary structure comprises 709 residues: Potassium-transporting ATPase ATP-binding subunit (709 aa).

4 helical membrane-spanning segments follow: residues Val55 to Ala75, Gly86 to Ala106, Ile236 to Leu256, and Val269 to Ser289. Asp324 serves as the catalytic 4-aspartylphosphate intermediate. ATP is bound by residues Asp361, Glu365, Phe395 to Ser402, and Lys417. The Mg(2+) site is built by Asp545 and Asp549. 3 helical membrane-spanning segments follow: residues Phe615 to Met635, Ala643 to Leu663, and Gly688 to Val708.

The protein belongs to the cation transport ATPase (P-type) (TC 3.A.3) family. Type IA subfamily. The system is composed of three essential subunits: KdpA, KdpB and KdpC.

Its subcellular location is the cell membrane. It catalyses the reaction K(+)(out) + ATP + H2O = K(+)(in) + ADP + phosphate + H(+). In terms of biological role, part of the high-affinity ATP-driven potassium transport (or Kdp) system, which catalyzes the hydrolysis of ATP coupled with the electrogenic transport of potassium into the cytoplasm. This subunit is responsible for energy coupling to the transport system and for the release of the potassium ions to the cytoplasm. In Mycobacterium tuberculosis (strain ATCC 25618 / H37Rv), this protein is Potassium-transporting ATPase ATP-binding subunit.